The chain runs to 857 residues: KH domain-containing protein HEN4 (857 aa).

Positions 1-15 (MERNSVKFHAEKRSG) are enriched in basic and acidic residues. Residues 1–27 (MERNSVKFHAEKRSGAFDPGSGFGSSK) are disordered. 4 KH domains span residues 46 to 110 (HAAF…KLGA), 149 to 217 (TVVC…LVSI), 451 to 521 (DVVF…IMLI), and 541 to 610 (SITA…IFHI). The disordered stretch occupies residues 644–755 (SDNPLSIGSH…RGLSDASGGL (112 aa)). Polar residues-rich tracts occupy residues 645-665 (DNPL…NSSS) and 673-688 (SFLS…SRSV). Residues 718–730 (FTMDHSDNSHHLT) are compositionally biased toward basic and acidic residues. Positions 746-755 (RGLSDASGGL) are enriched in low complexity. One can recognise a KH 5 domain in the interval 775 to 839 (NTTVEIRVPA…DQTQAAQNLL (65 aa)).

As to quaternary structure, interacts with HUA1. Interacts with FLK and PEP.

The protein localises to the nucleus speckle. In terms of biological role, functions in floral reproductive organ identity in the third whorl and floral determinacy specification by specifically promoting the processing of AGAMOUS (AG) pre-mRNA. Functions in association with HUA1 and HUA2. This is KH domain-containing protein HEN4 from Arabidopsis thaliana (Mouse-ear cress).